A 227-amino-acid chain; its full sequence is Ribose-5-phosphate isomerase A (227 aa).

Residues 26-29 (TGST), 82-85 (DGAD), and 95-98 (KGGG) each bind substrate. The active-site Proton acceptor is the Glu104. Position 122 (Lys122) interacts with substrate.

This sequence belongs to the ribose 5-phosphate isomerase family. Homodimer.

It carries out the reaction aldehydo-D-ribose 5-phosphate = D-ribulose 5-phosphate. Its pathway is carbohydrate degradation; pentose phosphate pathway; D-ribose 5-phosphate from D-ribulose 5-phosphate (non-oxidative stage): step 1/1. In terms of biological role, catalyzes the reversible conversion of ribose-5-phosphate to ribulose 5-phosphate. The sequence is that of Ribose-5-phosphate isomerase A from Streptococcus pyogenes serotype M5 (strain Manfredo).